The following is a 784-amino-acid chain: ATP-dependent zinc metalloprotease FTSH 9, chloroplastic/mitochondrial (784 aa).

Low complexity-rich tracts occupy residues 1–12 (MSALQASLLLRP), 24–34 (PLPSSSASFPR), and 42–53 (PLPLRALASEGP). Residues 1–47 (MSALQASLLLRPLPSPLPPRRRLPLPSSSASFPRAGHHRRLPLPLRA) constitute a chloroplast and mitochondrion transit peptide. The tract at residues 1 to 71 (MSALQASLLL…DPPPPELPAA (71 aa)) is disordered. The segment covering 54-69 (QPAPSPAPDPPPPELP) has biased composition (pro residues). A run of 2 helical transmembrane segments spans residues 104-124 (WVLALAAAVVAAARRFFDWVV) and 267-287 (IFSTVLFTIAVGLMWVMGAAA). 368 to 375 (GSPGTGKT) serves as a coordination point for ATP. Zn(2+) is bound at residue H601. E602 is a catalytic residue. Positions 605 and 679 each coordinate Zn(2+).

The protein in the N-terminal section; belongs to the AAA ATPase family. In the C-terminal section; belongs to the peptidase M41 family. The cofactor is Zn(2+).

The protein resides in the mitochondrion membrane. It is found in the plastid. The protein localises to the chloroplast thylakoid membrane. Its function is as follows. Probable ATP-dependent zinc metallopeptidase. The protein is ATP-dependent zinc metalloprotease FTSH 9, chloroplastic/mitochondrial (FTSH9) of Oryza sativa subsp. japonica (Rice).